The sequence spans 618 residues: Protein fem-1 homolog C (618 aa).

7 ANK repeats span residues 2–31 (DLKT…DREV), 40–70 (NGAT…PVEL), 82–111 (EGAP…SVNN), 115–144 (TNST…DLEV), 148–177 (HGHT…DVNR), 181–210 (KGNT…SMEK), and 213–243 (YGMT…GLAE). TPR repeat units lie at residues 245-279 (ISAL…RHSE) and 337-370 (SYYI…QQSN). ANK repeat units follow at residues 482–524 (NGFS…DVNS) and 528–557 (DDNS…HFDS).

Belongs to the fem-1 family. Component of a CRL2 E3 ubiquitin-protein ligase complex, also named ECS (Elongin BC-CUL2/5-SOCS-box protein) complex.

The protein operates within protein modification; protein ubiquitination. Functionally, substrate-recognition component of a Cul2-RING (CRL2) E3 ubiquitin-protein ligase complex of the DesCEND (destruction via C-end degrons) pathway, which recognizes a C-degron located at the extreme C terminus of target proteins, leading to their ubiquitination and degradation. The C-degron recognized by the DesCEND pathway is usually a motif of less than ten residues and can be present in full-length proteins, truncated proteins or proteolytically cleaved forms. The CRL2(FEM1C) complex specifically recognizes proteins with an arginine at the C-terminus: recognizes and binds proteins ending with -Lys/Arg-Xaa-Arg and -Lys/Arg-Xaa-Xaa-Arg C-degrons, leading to their ubiquitination and degradation. This chain is Protein fem-1 homolog C, found in Danio rerio (Zebrafish).